We begin with the raw amino-acid sequence, 422 residues long: Aminopentol aminotransferase (422 aa).

Residue lysine 258 is modified to N6-(pyridoxal phosphate)lysine.

It belongs to the class-III pyridoxal-phosphate-dependent aminotransferase family. It depends on pyridoxal 5'-phosphate as a cofactor.

Its subcellular location is the cytoplasm. The catalysed reaction is (2S,3S,5R,10R,12S,14S,15R,16R)-2-amino-12,16-dimethylicosane-3,5,10,14,15-pentol + pyruvate = (3S,5R,10R,12S,14S,15R,16R)-3,5,10,14,15-pentahydroxy-12,16-dimethylicosan-2-one + L-alanine. Its function is as follows. Involved in degradation of fumonisin B1. Catalyzes the deamination of aminopentol (HFB1) to 2-keto-HFB1. Pyruvate is the preferred cosubstrate, but it can also use several other alpha-keto acids as amino group acceptors. This is Aminopentol aminotransferase (fumI) from Sphingopyxis macrogoltabida (Sphingomonas macrogoltabidus).